A 407-amino-acid polypeptide reads, in one-letter code: Probable tRNA sulfurtransferase (407 aa).

A THUMP domain is found at 61–165; the sequence is NEITYRLSKI…LDAIYMYEEV (105 aa). Residues 183–184, 208–209, Arg265, Gly287, and Gln296 each bind ATP; these read ML and HF.

Belongs to the ThiI family.

It is found in the cytoplasm. The catalysed reaction is [ThiI sulfur-carrier protein]-S-sulfanyl-L-cysteine + a uridine in tRNA + 2 reduced [2Fe-2S]-[ferredoxin] + ATP + H(+) = [ThiI sulfur-carrier protein]-L-cysteine + a 4-thiouridine in tRNA + 2 oxidized [2Fe-2S]-[ferredoxin] + AMP + diphosphate. The enzyme catalyses [ThiS sulfur-carrier protein]-C-terminal Gly-Gly-AMP + S-sulfanyl-L-cysteinyl-[cysteine desulfurase] + AH2 = [ThiS sulfur-carrier protein]-C-terminal-Gly-aminoethanethioate + L-cysteinyl-[cysteine desulfurase] + A + AMP + 2 H(+). The protein operates within cofactor biosynthesis; thiamine diphosphate biosynthesis. Catalyzes the ATP-dependent transfer of a sulfur to tRNA to produce 4-thiouridine in position 8 of tRNAs, which functions as a near-UV photosensor. Also catalyzes the transfer of sulfur to the sulfur carrier protein ThiS, forming ThiS-thiocarboxylate. This is a step in the synthesis of thiazole, in the thiamine biosynthesis pathway. The sulfur is donated as persulfide by IscS. This Staphylococcus aureus (strain MSSA476) protein is Probable tRNA sulfurtransferase.